The chain runs to 419 residues: MGKGEELTTTKYLIHAQINANGIVEKPDVVGAVFGQTEGLLSNDLDLRELQRTGRIGRIQVMIHSNGGRAKGEIVIPSSLDRVETAILAASLETINRVGPCEAEIHTVKVEDVRAVKREQVVNRAKEIYKNMIESASPASMRMIEEVREAMRVHEISEYGEDRLPAGPSIHTSDAIIVVEGRSDVLNLLKYGIKNTVAVEGVSVPQSIGNLSKKRTTTAFVDGDRGGELILKELLQIGDVDYITRAPKGKEVEDLEKDEVLVALRDKVPTAQFLANHNILSESDSKNSHKKHNGKHNNKHSNNKHQQHETKVKEEVQIEEIPIEDDETKLMKDMLKEFEGSGCGAILDEALNMTQEVEVENIYEEIKNIETSADTVIFDGIISQRLVDVASLKGIKRLVAFRSMNIVKKPDNLKIITMD.

In terms of domain architecture, Toprim spans 174–260 (DAIIVVEGRS…EVEDLEKDEV (87 aa)). Positions 180, 222, and 224 each coordinate Mg(2+). Positions 277 to 314 (HNILSESDSKNSHKKHNGKHNNKHSNNKHQQHETKVKE) are disordered. Basic residues predominate over residues 288–305 (SHKKHNGKHNNKHSNNKH).

Belongs to the archaeal DnaG primase family. Forms a ternary complex with MCM helicase and DNA. Component of the archaeal exosome complex. Mg(2+) serves as cofactor.

The enzyme catalyses ssDNA + n NTP = ssDNA/pppN(pN)n-1 hybrid + (n-1) diphosphate.. In terms of biological role, RNA polymerase that catalyzes the synthesis of short RNA molecules used as primers for DNA polymerase during DNA replication. Also part of the exosome, which is a complex involved in RNA degradation. Acts as a poly(A)-binding protein that enhances the interaction between heteromeric, adenine-rich transcripts and the exosome. This is DNA primase DnaG from Methanobrevibacter smithii (strain ATCC 35061 / DSM 861 / OCM 144 / PS).